We begin with the raw amino-acid sequence, 155 residues long: Large ribosomal subunit protein uL15 (155 aa).

Positions 1–16 (MVRRFKRAVKYRRGSR) are enriched in basic residues. The tract at residues 1 to 35 (MVRRFKRAVKYRRGSRTHGWGRVGQHRKSGGSGGK) is disordered.

The protein belongs to the universal ribosomal protein uL15 family. As to quaternary structure, part of the 50S ribosomal subunit.

In terms of biological role, binds to the 23S rRNA. This is Large ribosomal subunit protein uL15 from Pyrobaculum arsenaticum (strain DSM 13514 / JCM 11321 / PZ6).